The primary structure comprises 308 residues: Ornithine carbamoyltransferase (308 aa).

Carbamoyl phosphate is bound by residues 55–58, Q82, R106, and 133–136; these read STRT and HPCQ. Residues N164, D227, and 231–232 contribute to the L-ornithine site; that span reads SM. Carbamoyl phosphate-binding positions include 267–268 and R295; that span reads CL.

Belongs to the aspartate/ornithine carbamoyltransferase superfamily. OTCase family.

The protein resides in the cytoplasm. It catalyses the reaction carbamoyl phosphate + L-ornithine = L-citrulline + phosphate + H(+). It participates in amino-acid biosynthesis; L-arginine biosynthesis; L-arginine from L-ornithine and carbamoyl phosphate: step 1/3. Its function is as follows. Reversibly catalyzes the transfer of the carbamoyl group from carbamoyl phosphate (CP) to the N(epsilon) atom of ornithine (ORN) to produce L-citrulline. This is Ornithine carbamoyltransferase from Prochlorococcus marinus (strain MIT 9312).